A 283-amino-acid chain; its full sequence is uncharacterized protein (283 aa).

The signal sequence occupies residues 1-23 (MFAFASFAISAIFFLCSFSYVSS).

It localises to the secreted. This is an uncharacterized protein from Schizosaccharomyces pombe (strain 972 / ATCC 24843) (Fission yeast).